The chain runs to 371 residues: Dihydroorotate dehydrogenase (quinone) (371 aa).

FMN is bound by residues 79 to 83 (AGFDK) and Thr103. Lys83 lines the substrate pocket. Position 128 to 132 (128 to 132 (NRMGF)) interacts with substrate. Residues Asn156 and Asn189 each contribute to the FMN site. Position 189 (Asn189) interacts with substrate. Ser192 acts as the Nucleophile in catalysis. Asn194 contacts substrate. Lys225 and Thr253 together coordinate FMN. 254-255 (NT) contributes to the substrate binding site. FMN is bound by residues Gly279, Gly308, and 329-330 (YT).

The protein belongs to the dihydroorotate dehydrogenase family. Type 2 subfamily. In terms of assembly, monomer. It depends on FMN as a cofactor.

It localises to the cell membrane. The catalysed reaction is (S)-dihydroorotate + a quinone = orotate + a quinol. It functions in the pathway pyrimidine metabolism; UMP biosynthesis via de novo pathway; orotate from (S)-dihydroorotate (quinone route): step 1/1. Functionally, catalyzes the conversion of dihydroorotate to orotate with quinone as electron acceptor. This is Dihydroorotate dehydrogenase (quinone) from Corynebacterium glutamicum (strain ATCC 13032 / DSM 20300 / JCM 1318 / BCRC 11384 / CCUG 27702 / LMG 3730 / NBRC 12168 / NCIMB 10025 / NRRL B-2784 / 534).